Here is a 169-residue protein sequence, read N- to C-terminus: Ribosome maturation factor RimM (169 aa).

The PRC barrel domain occupies 94 to 167 (ENEFYFHEII…KITIEVMEGL (74 aa)).

This sequence belongs to the RimM family. In terms of assembly, binds ribosomal protein uS19.

Its subcellular location is the cytoplasm. In terms of biological role, an accessory protein needed during the final step in the assembly of 30S ribosomal subunit, possibly for assembly of the head region. Essential for efficient processing of 16S rRNA. May be needed both before and after RbfA during the maturation of 16S rRNA. It has affinity for free ribosomal 30S subunits but not for 70S ribosomes. The protein is Ribosome maturation factor RimM of Listeria monocytogenes serotype 4b (strain F2365).